The chain runs to 77 residues: Acyl carrier protein (77 aa).

The 76-residue stretch at 1–76 (MSLEDDVKSI…DVITYIKTRQ (76 aa)) folds into the Carrier domain. S36 is subject to O-(pantetheine 4'-phosphoryl)serine.

The protein belongs to the acyl carrier protein (ACP) family. In terms of processing, 4'-phosphopantetheine is transferred from CoA to a specific serine of apo-ACP by AcpS. This modification is essential for activity because fatty acids are bound in thioester linkage to the sulfhydryl of the prosthetic group.

It localises to the cytoplasm. The protein operates within lipid metabolism; fatty acid biosynthesis. Functionally, carrier of the growing fatty acid chain in fatty acid biosynthesis. This chain is Acyl carrier protein, found in Chlamydia caviae (strain ATCC VR-813 / DSM 19441 / 03DC25 / GPIC) (Chlamydophila caviae).